A 315-amino-acid chain; its full sequence is Methionyl-tRNA formyltransferase (315 aa).

107 to 110 contributes to the (6S)-5,6,7,8-tetrahydrofolate binding site; the sequence is SLLP.

It belongs to the Fmt family.

The enzyme catalyses L-methionyl-tRNA(fMet) + (6R)-10-formyltetrahydrofolate = N-formyl-L-methionyl-tRNA(fMet) + (6S)-5,6,7,8-tetrahydrofolate + H(+). Attaches a formyl group to the free amino group of methionyl-tRNA(fMet). The formyl group appears to play a dual role in the initiator identity of N-formylmethionyl-tRNA by promoting its recognition by IF2 and preventing the misappropriation of this tRNA by the elongation apparatus. The sequence is that of Methionyl-tRNA formyltransferase from Borrelia garinii subsp. bavariensis (strain ATCC BAA-2496 / DSM 23469 / PBi) (Borreliella bavariensis).